A 257-amino-acid chain; its full sequence is Imidazole glycerol phosphate synthase subunit HisF (257 aa).

Catalysis depends on residues Asp-11 and Asp-130.

It belongs to the HisA/HisF family. Heterodimer of HisH and HisF.

It is found in the cytoplasm. The catalysed reaction is 5-[(5-phospho-1-deoxy-D-ribulos-1-ylimino)methylamino]-1-(5-phospho-beta-D-ribosyl)imidazole-4-carboxamide + L-glutamine = D-erythro-1-(imidazol-4-yl)glycerol 3-phosphate + 5-amino-1-(5-phospho-beta-D-ribosyl)imidazole-4-carboxamide + L-glutamate + H(+). The protein operates within amino-acid biosynthesis; L-histidine biosynthesis; L-histidine from 5-phospho-alpha-D-ribose 1-diphosphate: step 5/9. Its function is as follows. IGPS catalyzes the conversion of PRFAR and glutamine to IGP, AICAR and glutamate. The HisF subunit catalyzes the cyclization activity that produces IGP and AICAR from PRFAR using the ammonia provided by the HisH subunit. The protein is Imidazole glycerol phosphate synthase subunit HisF of Shewanella sp. (strain W3-18-1).